The following is a 182-amino-acid chain: Inner membrane assembly complex subunit 17 (182 aa).

The transit peptide at 1 to 45 (MLKRRSNALITLSRTKLFPITTVAYYHRRLLNQQRRAVSTSPKKE) directs the protein to the mitochondrion. Residues 46–107 (IKSLEDLANL…EIPVKRFIRP (62 aa)) lie on the Mitochondrial matrix side of the membrane. A helical membrane pass occupies residues 108-127 (LWMFILMGSSVYLLLHFSWW). Residues 128 to 158 (KLEHEERESQLKKEVEILEHQLNELIIQDKT) are a coiled coil. The Mitochondrial intermembrane segment spans residues 128-182 (KLEHEERESQLKKEVEILEHQLNELIIQDKTHNTSRGKGSNESTHMKPWYRRWFW).

The protein belongs to the INA17 family. As to quaternary structure, component of the inner membrane assembly (INA) complex, composed of INA17 and INA22. Interacts with a subset of F(1)F(0)-ATP synthase subunits of the F(1)-domain and the peripheral stalk.

It is found in the mitochondrion inner membrane. Functionally, component of the INA complex (INAC) that promotes the biogenesis of mitochondrial F(1)F(0)-ATP synthase. INAC facilitates the assembly of the peripheral stalk and promotes the assembly of the catalytic F(1)-domain with the membrane-embedded F(0)-domain. This chain is Inner membrane assembly complex subunit 17, found in Saccharomyces cerevisiae (strain YJM789) (Baker's yeast).